The primary structure comprises 565 residues: NAD-dependent malic enzyme (565 aa).

Tyr104 serves as the catalytic Proton donor. Arg157 serves as a coordination point for NAD(+). Lys175 (proton acceptor) is an active-site residue. Positions 246, 247, and 270 each coordinate a divalent metal cation. Residues Asp270 and Asn418 each contribute to the NAD(+) site.

The protein belongs to the malic enzymes family. Homotetramer. Mg(2+) is required as a cofactor. Mn(2+) serves as cofactor.

It carries out the reaction (S)-malate + NAD(+) = pyruvate + CO2 + NADH. It catalyses the reaction oxaloacetate + H(+) = pyruvate + CO2. The sequence is that of NAD-dependent malic enzyme from Escherichia coli O157:H7.